Consider the following 382-residue polypeptide: Lipid-A-disaccharide synthase (382 aa).

The protein belongs to the LpxB family.

The enzyme catalyses 2-N,3-O-bis[(3R)-3-hydroxytetradecanoyl]-alpha-D-glucosaminyl 1-phosphate + UDP-2-N,3-O-bis[(3R)-3-hydroxytetradecanoyl]-alpha-D-glucosamine = lipid A disaccharide (E. coli) + UDP + H(+). It catalyses the reaction a lipid X + a UDP-2-N,3-O-bis[(3R)-3-hydroxyacyl]-alpha-D-glucosamine = a lipid A disaccharide + UDP + H(+). It functions in the pathway glycolipid biosynthesis; lipid IV(A) biosynthesis; lipid IV(A) from (3R)-3-hydroxytetradecanoyl-[acyl-carrier-protein] and UDP-N-acetyl-alpha-D-glucosamine: step 5/6. Condensation of UDP-2,3-diacylglucosamine and 2,3-diacylglucosamine-1-phosphate to form lipid A disaccharide, a precursor of lipid A, a phosphorylated glycolipid that anchors the lipopolysaccharide to the outer membrane of the cell. This Enterobacter sp. (strain 638) protein is Lipid-A-disaccharide synthase.